The sequence spans 291 residues: 4-diphosphocytidyl-2-C-methyl-D-erythritol kinase (291 aa).

Lysine 10 is a catalytic residue. 94–104 (PVSAGLAGGSS) contributes to the ATP binding site. Aspartate 136 is a catalytic residue.

Belongs to the GHMP kinase family. IspE subfamily.

It carries out the reaction 4-CDP-2-C-methyl-D-erythritol + ATP = 4-CDP-2-C-methyl-D-erythritol 2-phosphate + ADP + H(+). The protein operates within isoprenoid biosynthesis; isopentenyl diphosphate biosynthesis via DXP pathway; isopentenyl diphosphate from 1-deoxy-D-xylulose 5-phosphate: step 3/6. Catalyzes the phosphorylation of the position 2 hydroxy group of 4-diphosphocytidyl-2C-methyl-D-erythritol. This Listeria innocua serovar 6a (strain ATCC BAA-680 / CLIP 11262) protein is 4-diphosphocytidyl-2-C-methyl-D-erythritol kinase.